The following is a 59-amino-acid chain: UPF0337 protein MM_2677 (59 aa).

2 stretches are compositionally biased toward basic and acidic residues: residues 1 to 24 (MKEG…KESA) and 33 to 59 (MEAK…EFEK). The interval 1 to 59 (MKEGTKEEMEGKFSKAKGEIKESAGEMTGDIEMEAKGEAEKRKGEAQEKVGKIRKEFEK) is disordered.

It belongs to the UPF0337 (CsbD) family.

The chain is UPF0337 protein MM_2677 from Methanosarcina mazei (strain ATCC BAA-159 / DSM 3647 / Goe1 / Go1 / JCM 11833 / OCM 88) (Methanosarcina frisia).